The primary structure comprises 138 residues: Cysteine desulfuration protein SufE (138 aa).

Cysteine 51 acts as the Cysteine persulfide intermediate in catalysis.

The protein belongs to the SufE family. In terms of assembly, homodimer. Interacts with SufS.

Its subcellular location is the cytoplasm. It functions in the pathway cofactor biosynthesis; iron-sulfur cluster biosynthesis. Its function is as follows. Participates in cysteine desulfuration mediated by SufS. Cysteine desulfuration mobilizes sulfur from L-cysteine to yield L-alanine and constitutes an essential step in sulfur metabolism for biosynthesis of a variety of sulfur-containing biomolecules. Functions as a sulfur acceptor for SufS, by mediating the direct transfer of the sulfur atom from the S-sulfanylcysteine of SufS, an intermediate product of cysteine desulfuration process. This is Cysteine desulfuration protein SufE from Escherichia coli O157:H7.